The primary structure comprises 607 residues: Probable LRR receptor-like serine/threonine-protein kinase At5g65240 (607 aa).

A signal peptide spans 1–24 (MALLIITALVFSSLWSSVSPDAQG). Topologically, residues 25–219 (DALFALRSSL…SGDSSSRKTG (195 aa)) are extracellular. 2 N-linked (GlcNAc...) asparagine glycosylation sites follow: Asn-74 and Asn-110. LRR repeat units lie at residues 87–111 (LTTLKTLTLKGNGIMGGIPESIGNL), 112–135 (SSLTSLDLEDNHLTDRIPSTLGNL), 137–159 (NLQFLTLSRNNLNGSIPDSLTGL), and 160–183 (SKLINILLDSNNLSGEIPQSLFKI). Asn-149, Asn-171, Asn-187, and Asn-192 each carry an N-linked (GlcNAc...) asparagine glycan. The helical transmembrane segment at 220–240 (IIAGVVSGIAVILLGFFFFFF) threads the bilayer. Topologically, residues 241–607 (CKDKHKGYKR…QDAIELSGGR (367 aa)) are cytoplasmic. The residue at position 281 (Thr-281) is a Phosphothreonine. The 285-residue stretch at 284-568 (FSEKNVLGQG…EGEGLAERWE (285 aa)) folds into the Protein kinase domain. 290–298 (LGQGGFGKV) provides a ligand contact to ATP. Thr-307 is subject to Phosphothreonine. Lys-312 is an ATP binding site. Position 365 is a phosphoserine (Ser-365). Asp-411 serves as the catalytic Proton acceptor. Thr-444, Thr-445, and Thr-450 each carry phosphothreonine. Ser-460 bears the Phosphoserine mark. Position 461 is a phosphothreonine (Thr-461). Position 465 is a phosphoserine (Ser-465). Residue Thr-541 is modified to Phosphothreonine.

This sequence belongs to the protein kinase superfamily. Ser/Thr protein kinase family.

It is found in the cell membrane. It catalyses the reaction L-seryl-[protein] + ATP = O-phospho-L-seryl-[protein] + ADP + H(+). The enzyme catalyses L-threonyl-[protein] + ATP = O-phospho-L-threonyl-[protein] + ADP + H(+). The protein is Probable LRR receptor-like serine/threonine-protein kinase At5g65240 of Arabidopsis thaliana (Mouse-ear cress).